The following is a 295-amino-acid chain: 4-hydroxy-tetrahydrodipicolinate synthase (295 aa).

Thr47 is a binding site for pyruvate. The Proton donor/acceptor role is filled by Tyr135. Lys163 serves as the catalytic Schiff-base intermediate with substrate. Ile206 is a binding site for pyruvate.

This sequence belongs to the DapA family. In terms of assembly, homodimer.

Its subcellular location is the cytoplasm. The enzyme catalyses L-aspartate 4-semialdehyde + pyruvate = (2S,4S)-4-hydroxy-2,3,4,5-tetrahydrodipicolinate + H2O + H(+). The protein operates within amino-acid biosynthesis; L-lysine biosynthesis via DAP pathway; (S)-tetrahydrodipicolinate from L-aspartate: step 3/4. Catalyzes the condensation of (S)-aspartate-beta-semialdehyde [(S)-ASA] and pyruvate to 4-hydroxy-tetrahydrodipicolinate (HTPA). In Staphylococcus aureus (strain bovine RF122 / ET3-1), this protein is 4-hydroxy-tetrahydrodipicolinate synthase.